The primary structure comprises 485 residues: UBX domain-containing protein 11 (485 aa).

Residues 1–26 (MSSPLASLSKTRKVPLESEPVNPGRR) are disordered. A coiled-coil region spans residues 67–143 (HDSELLTSMA…VGEMERFLND (77 aa)). Residues 224 to 288 (LEPIPLKLYR…VSDLRNQVYP (65 aa)) form the SEP domain. The UBX domain maps to 386-463 (PVPPLSMLRI…GLVPNATLLL (78 aa)). Residues Ser-479 and Ser-483 each carry the phosphoserine modification.

Interacts with GNA12, GNA13, RND1, RND2 and RND3. Strongly expressed in testis. Also expressed in lung, brain and thymus.

The protein localises to the cytoplasm. Its subcellular location is the cytoskeleton. Functionally, may be involved in the reorganization of actin cytoskeleton mediated by RND1, RND2 and RND3. Promotes RHOA activation mediated by GNA12 and GNA13. The protein is UBX domain-containing protein 11 (Ubxn11) of Rattus norvegicus (Rat).